The chain runs to 308 residues: MTKRKHVAVLLGGWSSEREVSLRSGKACADALERCGYQVTRVDVQRNIGTVLDQLKPDVALVMLHGRPGEDGTIQGVLETLGIPYSHSGVLASALAMQKDLAKTVMATAGVPVAEGLTLSRAEVAKRHVMAPPYVIKPVADGSSVGVFMVTEAHEHPPQELFRDDWPHGEQLLVEKYVAGKELTCAVVKGEPTGVIEIVQTNKFYDYEAKYSPGGSNHILPASLLPFVYQEVRRLTLAAHVALGCRGVSRADFRFDDRIEGTAGLICLEVNTQPGMTETSLVPELAADAGITFDELVQWMVEDASLGR.

The region spanning 103 to 302 (KTVMATAGVP…FDELVQWMVE (200 aa)) is the ATP-grasp domain. 130 to 184 (MAPPYVIKPVADGSSVGVFMVTEAHEHPPQELFRDDWPHGEQLLVEKYVAGKELT) contacts ATP. The Mg(2+) site is built by Asp252, Glu269, and Asn271.

Belongs to the D-alanine--D-alanine ligase family. The cofactor is Mg(2+). Requires Mn(2+) as cofactor.

The protein localises to the cytoplasm. The enzyme catalyses 2 D-alanine + ATP = D-alanyl-D-alanine + ADP + phosphate + H(+). The protein operates within cell wall biogenesis; peptidoglycan biosynthesis. Cell wall formation. This is D-alanine--D-alanine ligase from Rhodopseudomonas palustris (strain BisB18).